The chain runs to 433 residues: 28S rRNA (cytosine-C(5))-methyltransferase (433 aa).

S-adenosyl-L-methionine is bound by residues 235–241 (CAAPGMK), Glu-259, Asp-286, and Asp-304. Catalysis depends on Cys-357, which acts as the Nucleophile.

Belongs to the class I-like SAM-binding methyltransferase superfamily. RsmB/NOP family.

It catalyses the reaction a cytidine in 28S rRNA + S-adenosyl-L-methionine = a 5-methylcytidine in 28S rRNA + S-adenosyl-L-homocysteine + H(+). Its function is as follows. S-adenosyl-L-methionine-dependent methyltransferase that specifically methylates the C(5) position of a cytosine in 28S rRNA. This Drosophila melanogaster (Fruit fly) protein is 28S rRNA (cytosine-C(5))-methyltransferase.